The following is a 411-amino-acid chain: F-box protein At4g19940 (411 aa).

Positions 29–75 (RQPIPEIPFDLVIEILTRLPAKSLMRFKSVSKLWSSLICSRNFTNRL) constitute an F-box domain.

This chain is F-box protein At4g19940, found in Arabidopsis thaliana (Mouse-ear cress).